A 381-amino-acid polypeptide reads, in one-letter code: Alcohol dehydrogenase-like 6 (381 aa).

The Zn(2+) site is built by cysteine 53, serine 55, histidine 72, cysteine 102, cysteine 105, cysteine 108, cysteine 116, and cysteine 179. The an alcohol site is built by serine 55 and histidine 72. Position 55 (serine 55) interacts with NAD(+). NAD(+) contacts are provided by residues 204–209 (GLGTVG), aspartate 228, lysine 233, 297–299 (LGV), phenylalanine 324, and arginine 374.

It belongs to the zinc-containing alcohol dehydrogenase family. Class-III subfamily. As to quaternary structure, homodimer. Zn(2+) serves as cofactor.

The protein resides in the cytoplasm. It catalyses the reaction a primary alcohol + NAD(+) = an aldehyde + NADH + H(+). The enzyme catalyses a secondary alcohol + NAD(+) = a ketone + NADH + H(+). This chain is Alcohol dehydrogenase-like 6, found in Arabidopsis thaliana (Mouse-ear cress).